The following is a 298-amino-acid chain: N-acetylmuramic acid 6-phosphate etherase (298 aa).

In terms of domain architecture, SIS spans Ile55–Lys218. Catalysis depends on Glu83, which acts as the Proton donor. Residue Glu114 is part of the active site.

This sequence belongs to the GCKR-like family. MurNAc-6-P etherase subfamily. In terms of assembly, homodimer.

It carries out the reaction N-acetyl-D-muramate 6-phosphate + H2O = N-acetyl-D-glucosamine 6-phosphate + (R)-lactate. Its pathway is amino-sugar metabolism; 1,6-anhydro-N-acetylmuramate degradation. It functions in the pathway amino-sugar metabolism; N-acetylmuramate degradation. The protein operates within cell wall biogenesis; peptidoglycan recycling. Its function is as follows. Specifically catalyzes the cleavage of the D-lactyl ether substituent of MurNAc 6-phosphate, producing GlcNAc 6-phosphate and D-lactate. Together with AnmK, is also required for the utilization of anhydro-N-acetylmuramic acid (anhMurNAc) either imported from the medium or derived from its own cell wall murein, and thus plays a role in cell wall recycling. This Escherichia coli (strain SMS-3-5 / SECEC) protein is N-acetylmuramic acid 6-phosphate etherase.